We begin with the raw amino-acid sequence, 388 residues long: MRSDLLPASGTYADIPIGEVLTEAGASIPETSLRLYAFYDAAEQAAVPTPPEERPIVLIEHALTGDGNAADWWADMVGVGKPIDTAKYLVLCANALGGCAGSTGPSSLHPEGGFWGSRFPGLSIRDLVQAEKQLLDVLEIPRVHVIIGASMGGARTLEWSLLYPEMMDAILPIAVSARASAWQIGIQSAQIRVIEADPLWHGGDYYEAGMGPVWGLGEARRIAHLTYRGELEVDERFGAEPQQGENPLGKFRSPDQRFSVEGYLDRQAMKLRNRFDAGSYVTLTDALNRHDLGRDRGGMNAALGNSTVPTMVCGIDTDILYPYHQQEHLSRNLGTFLGLSQITSPTGHDGFLIEARQMGNVLEKFLVTAEKLAKDPEQRANILQQHHH.

The AB hydrolase-1 domain maps to 55–354 (PIVLIEHALT…PTGHDGFLIE (300 aa)). The Nucleophile role is filled by Ser150. Residue Arg220 coordinates substrate. Residues Asp318 and His348 contribute to the active site. Asp349 provides a ligand contact to substrate.

This sequence belongs to the AB hydrolase superfamily. MetX family. Homodimer.

Its subcellular location is the cytoplasm. It carries out the reaction L-homoserine + acetyl-CoA = O-acetyl-L-homoserine + CoA. It functions in the pathway amino-acid biosynthesis; L-methionine biosynthesis via de novo pathway; O-acetyl-L-homoserine from L-homoserine: step 1/1. Its function is as follows. Transfers an acetyl group from acetyl-CoA to L-homoserine, forming acetyl-L-homoserine. The polypeptide is Homoserine O-acetyltransferase (Corynebacterium urealyticum (strain ATCC 43042 / DSM 7109)).